Reading from the N-terminus, the 297-residue chain is Mycothiol acetyltransferase (297 aa).

E35 is a 1D-myo-inositol 2-(L-cysteinylamino)-2-deoxy-alpha-D-glucopyranoside binding site. Position 73 to 75 (M73 to V75) interacts with acetyl-CoA. In terms of domain architecture, N-acetyltransferase spans L155–P297. 1D-myo-inositol 2-(L-cysteinylamino)-2-deoxy-alpha-D-glucopyranoside contacts are provided by E181, K222, and E230. Acetyl-CoA is bound by residues L234–V236 and Q241–R247. Y268 contributes to the 1D-myo-inositol 2-(L-cysteinylamino)-2-deoxy-alpha-D-glucopyranoside binding site.

The protein belongs to the acetyltransferase family. MshD subfamily. In terms of assembly, monomer.

It carries out the reaction 1D-myo-inositol 2-(L-cysteinylamino)-2-deoxy-alpha-D-glucopyranoside + acetyl-CoA = mycothiol + CoA + H(+). In terms of biological role, catalyzes the transfer of acetyl from acetyl-CoA to desacetylmycothiol (Cys-GlcN-Ins) to form mycothiol. In Beutenbergia cavernae (strain ATCC BAA-8 / DSM 12333 / CCUG 43141 / JCM 11478 / NBRC 16432 / NCIMB 13614 / HKI 0122), this protein is Mycothiol acetyltransferase.